A 114-amino-acid polypeptide reads, in one-letter code: MEAIAKHRYARTSAQKARLVADQVRGLSVDKALNILTFSPKKAAVLVKKVLESAIANAEHNEGADIDALRVATIMVDEGPSMKRIRPRAKGRADRILKRTAHITVVVSDAKAGR.

This sequence belongs to the universal ribosomal protein uL22 family. In terms of assembly, part of the 50S ribosomal subunit.

In terms of biological role, this protein binds specifically to 23S rRNA; its binding is stimulated by other ribosomal proteins, e.g. L4, L17, and L20. It is important during the early stages of 50S assembly. It makes multiple contacts with different domains of the 23S rRNA in the assembled 50S subunit and ribosome. The globular domain of the protein is located near the polypeptide exit tunnel on the outside of the subunit, while an extended beta-hairpin is found that lines the wall of the exit tunnel in the center of the 70S ribosome. The polypeptide is Large ribosomal subunit protein uL22 (Aeromonas salmonicida (strain A449)).